We begin with the raw amino-acid sequence, 148 residues long: 3-dehydroquinate dehydratase (148 aa).

Tyrosine 23 serves as the catalytic Proton acceptor. Substrate-binding residues include asparagine 75, histidine 81, and aspartate 88. Residue histidine 101 is the Proton donor of the active site. Residues 102-103 (MS) and arginine 112 each bind substrate.

The protein belongs to the type-II 3-dehydroquinase family. Homododecamer.

The catalysed reaction is 3-dehydroquinate = 3-dehydroshikimate + H2O. The protein operates within metabolic intermediate biosynthesis; chorismate biosynthesis; chorismate from D-erythrose 4-phosphate and phosphoenolpyruvate: step 3/7. Functionally, catalyzes a trans-dehydration via an enolate intermediate. The chain is 3-dehydroquinate dehydratase from Syntrophotalea carbinolica (strain DSM 2380 / NBRC 103641 / GraBd1) (Pelobacter carbinolicus).